The primary structure comprises 63 residues: Large ribosomal subunit protein bL35 (63 aa).

The protein belongs to the bacterial ribosomal protein bL35 family.

The chain is Large ribosomal subunit protein bL35 from Campylobacter concisus (strain 13826).